The primary structure comprises 432 residues: Glutamyl-tRNA reductase (432 aa).

Residues 49–52 (TCNR), Ser101, 106–108 (EPQ), and Gln112 each bind substrate. The active-site Nucleophile is Cys50. Residue 181 to 186 (GAGETI) coordinates NADP(+). A disordered region spans residues 407–432 (FPEKPGYQHPPIATPIVRTDDADPAP).

The protein belongs to the glutamyl-tRNA reductase family. As to quaternary structure, homodimer.

The enzyme catalyses (S)-4-amino-5-oxopentanoate + tRNA(Glu) + NADP(+) = L-glutamyl-tRNA(Glu) + NADPH + H(+). Its pathway is porphyrin-containing compound metabolism; protoporphyrin-IX biosynthesis; 5-aminolevulinate from L-glutamyl-tRNA(Glu): step 1/2. Its function is as follows. Catalyzes the NADPH-dependent reduction of glutamyl-tRNA(Glu) to glutamate 1-semialdehyde (GSA). The protein is Glutamyl-tRNA reductase of Xanthomonas oryzae pv. oryzae (strain PXO99A).